Here is a 601-residue protein sequence, read N- to C-terminus: Probable cytochrome P450 525A1 (601 aa).

The helical transmembrane segment at 12-32 (ISYFLTCSIFGFILWILTEQI) threads the bilayer. The disordered stretch occupies residues 205-253 (NNNNNNNNNNNNNNNNNNNNNNNNNNNNNNNNNNNNNNNNNNNNNNNNN). Cys-544 contacts heme.

The protein belongs to the cytochrome P450 family. Heme serves as cofactor.

It localises to the membrane. This chain is Probable cytochrome P450 525A1 (cyp525A1), found in Dictyostelium discoideum (Social amoeba).